Reading from the N-terminus, the 132-residue chain is Small ribosomal subunit protein uS8 (132 aa).

It belongs to the universal ribosomal protein uS8 family. Part of the 30S ribosomal subunit. Contacts proteins S5 and S12.

One of the primary rRNA binding proteins, it binds directly to 16S rRNA central domain where it helps coordinate assembly of the platform of the 30S subunit. In Streptococcus agalactiae serotype V (strain ATCC BAA-611 / 2603 V/R), this protein is Small ribosomal subunit protein uS8.